The primary structure comprises 380 residues: Succinate--CoA ligase [ADP-forming] subunit beta (380 aa).

Residues 9–236 (KGVFADAGIP…EAAGDELEAK (228 aa)) form the ATP-grasp domain. Residues K45, 52-54 (GRG), E91, V94, and E99 contribute to the ATP site. Positions 191 and 205 each coordinate Mg(2+). Substrate-binding positions include N256 and 313–315 (GIT).

Belongs to the succinate/malate CoA ligase beta subunit family. As to quaternary structure, heterotetramer of two alpha and two beta subunits. The cofactor is Mg(2+).

It carries out the reaction succinate + ATP + CoA = succinyl-CoA + ADP + phosphate. The catalysed reaction is GTP + succinate + CoA = succinyl-CoA + GDP + phosphate. It participates in carbohydrate metabolism; tricarboxylic acid cycle; succinate from succinyl-CoA (ligase route): step 1/1. In terms of biological role, succinyl-CoA synthetase functions in the citric acid cycle (TCA), coupling the hydrolysis of succinyl-CoA to the synthesis of either ATP or GTP and thus represents the only step of substrate-level phosphorylation in the TCA. The beta subunit provides nucleotide specificity of the enzyme and binds the substrate succinate, while the binding sites for coenzyme A and phosphate are found in the alpha subunit. The polypeptide is Succinate--CoA ligase [ADP-forming] subunit beta (Natronomonas pharaonis (strain ATCC 35678 / DSM 2160 / CIP 103997 / JCM 8858 / NBRC 14720 / NCIMB 2260 / Gabara) (Halobacterium pharaonis)).